The following is a 238-amino-acid chain: tRNA1(Val) (adenine(37)-N6)-methyltransferase (238 aa).

The protein belongs to the methyltransferase superfamily. tRNA (adenine-N(6)-)-methyltransferase family.

It is found in the cytoplasm. It catalyses the reaction adenosine(37) in tRNA1(Val) + S-adenosyl-L-methionine = N(6)-methyladenosine(37) in tRNA1(Val) + S-adenosyl-L-homocysteine + H(+). In terms of biological role, specifically methylates the adenine in position 37 of tRNA(1)(Val) (anticodon cmo5UAC). This Cytophaga hutchinsonii (strain ATCC 33406 / DSM 1761 / CIP 103989 / NBRC 15051 / NCIMB 9469 / D465) protein is tRNA1(Val) (adenine(37)-N6)-methyltransferase.